A 57-amino-acid polypeptide reads, in one-letter code: Small hydrophobic protein (57 aa).

Over 1-8 (MPAIQPPL) the chain is Virion surface. The chain crosses the membrane as a helical span at residues 9-29 (YLTFLLLILLYLIITLYVWTI). The Intravirion portion of the chain corresponds to 30–57 (LTINHKTAVRYAALYQRSCSRWGFDQSL).

This sequence belongs to the rubulavirus small hydrophobic protein family. Interacts with host TNFRSF1A, RIPK1 and IRAK1; these interactions interfere with host NF-kappa-B activation at the level of receptor complexes. Interacts with host protein UBQLN4.

It localises to the virion membrane. Its subcellular location is the host cell membrane. Functionally, plays a role in the inhibition of the host NF-kappa-B pathway. This inhibition occurs at the receptor level, by preventing the signaling of TNFR1 as well as IL-1R and TLR3. The polypeptide is Small hydrophobic protein (SH) (Mumps virus (strain Enders) (MuV)).